The chain runs to 127 residues: Nuclear transport factor 2 (127 aa).

Lys4 is subject to N6-acetyllysine. Positions 10 to 121 constitute an NTF2 domain; it reads IGSSFIQHYY…WVCTNDMFRL (112 aa).

In terms of assembly, homodimer. Interacts with RAN (GDP-bound form); the interaction is direct and regulates RAN nuclear import. Interacts with the nucleoporins NUP54, NUP58 and NUP62 (via FG repeats); recruits NUTF2 to the nuclear pore complex a step required for NUTF2-mediated GDP-bound RAN nuclear import. Interacts with CAPG; mediates its nuclear import.

Its subcellular location is the cytoplasm. It localises to the cytosol. The protein resides in the nucleus outer membrane. It is found in the nucleus. The protein localises to the nuclear pore complex. Its subcellular location is the nucleus inner membrane. It localises to the nucleoplasm. Mediates the import of GDP-bound RAN from the cytoplasm into the nucleus which is essential for the function of RAN in cargo receptor-mediated nucleocytoplasmic transport. Thereby, plays indirectly a more general role in cargo receptor-mediated nucleocytoplasmic transport. Interacts with GDP-bound RAN in the cytosol, recruits it to the nuclear pore complex via its interaction with nucleoporins and promotes its nuclear import. In Bos taurus (Bovine), this protein is Nuclear transport factor 2.